The primary structure comprises 37 residues: Large ribosomal subunit protein bL36 (37 aa).

It belongs to the bacterial ribosomal protein bL36 family.

This Fusobacterium nucleatum subsp. nucleatum (strain ATCC 25586 / DSM 15643 / BCRC 10681 / CIP 101130 / JCM 8532 / KCTC 2640 / LMG 13131 / VPI 4355) protein is Large ribosomal subunit protein bL36 (rpmJ).